A 566-amino-acid chain; its full sequence is CTP synthase (566 aa).

Residues M1–L265 are amidoligase domain. CTP is bound at residue S13. S13 contacts UTP. ATP-binding positions include S14–I19 and D71. D71 and E139 together coordinate Mg(2+). Residues D146–E148, K186–Q191, and K222 each bind CTP. Residues K186–Q191 and K222 each bind UTP. The 254-residue stretch at E290–K543 folds into the Glutamine amidotransferase type-1 domain. G351 serves as a coordination point for L-glutamine. The active-site Nucleophile; for glutamine hydrolysis is C378. L-glutamine is bound by residues L379–Q382, E402, and R469. Residues H516 and E518 contribute to the active site. Positions P545–Q566 are disordered.

The protein belongs to the CTP synthase family. As to quaternary structure, homotetramer.

It carries out the reaction UTP + L-glutamine + ATP + H2O = CTP + L-glutamate + ADP + phosphate + 2 H(+). It catalyses the reaction L-glutamine + H2O = L-glutamate + NH4(+). The catalysed reaction is UTP + NH4(+) + ATP = CTP + ADP + phosphate + 2 H(+). It participates in pyrimidine metabolism; CTP biosynthesis via de novo pathway; CTP from UDP: step 2/2. With respect to regulation, allosterically activated by GTP, when glutamine is the substrate; GTP has no effect on the reaction when ammonia is the substrate. The allosteric effector GTP functions by stabilizing the protein conformation that binds the tetrahedral intermediate(s) formed during glutamine hydrolysis. Inhibited by the product CTP, via allosteric rather than competitive inhibition. Catalyzes the ATP-dependent amination of UTP to CTP with either L-glutamine or ammonia as the source of nitrogen. Regulates intracellular CTP levels through interactions with the four ribonucleotide triphosphates. This is CTP synthase from Nitrosospira multiformis (strain ATCC 25196 / NCIMB 11849 / C 71).